The following is a 301-amino-acid chain: Ribosomal RNA small subunit methyltransferase H (301 aa).

S-adenosyl-L-methionine-binding positions include 35–37, D55, F84, D105, and Q112; that span reads GGH.

It belongs to the methyltransferase superfamily. RsmH family.

It localises to the cytoplasm. It carries out the reaction cytidine(1402) in 16S rRNA + S-adenosyl-L-methionine = N(4)-methylcytidine(1402) in 16S rRNA + S-adenosyl-L-homocysteine + H(+). Functionally, specifically methylates the N4 position of cytidine in position 1402 (C1402) of 16S rRNA. The chain is Ribosomal RNA small subunit methyltransferase H from Chloroflexus aggregans (strain MD-66 / DSM 9485).